The sequence spans 133 residues: Small ribosomal subunit protein uS11 (133 aa).

It belongs to the universal ribosomal protein uS11 family. As to quaternary structure, part of the 30S ribosomal subunit. Interacts with proteins S7 and S18. Binds to IF-3.

Its function is as follows. Located on the platform of the 30S subunit, it bridges several disparate RNA helices of the 16S rRNA. Forms part of the Shine-Dalgarno cleft in the 70S ribosome. The chain is Small ribosomal subunit protein uS11 from Ralstonia pickettii (strain 12J).